The primary structure comprises 452 residues: Phosphatidylserine synthase 2 (452 aa).

Over 1 to 35 (MAKGEWKRSGADDLPLPGRSECEVFDDGTNTFFWR) the chain is Cytoplasmic. A helical membrane pass occupies residues 36–56 (AHTVTVLFILTCALVYVTLLE). The Lumenal portion of the chain corresponds to 57–69 (ETPHDTAYNTKRG). Residues 70-90 (IVASILVFLCFGVTQAKDGPF) traverse the membrane as a helical segment. Residues 91-99 (TRPHPAYWR) are Cytoplasmic-facing. Residues 100–120 (FWLCVSVVYELFLIFILFQTV) traverse the membrane as a helical segment. The Lumenal segment spans residues 121 to 286 (HDGRQFMKYI…EWRPASNLRR (166 aa)). A helical membrane pass occupies residues 287–307 (WLAVLGIIFMFLLAELNTFYL). Lys-308 is a topological domain (cytoplasmic). The chain crosses the membrane as a helical span at residues 309–329 (FVMWMPPEHYLVLFRLVFFVN). The Lumenal portion of the chain corresponds to 330 to 349 (VGGVAMREIYDFMDDPKFHK). A helical membrane pass occupies residues 350–370 (KLGQQAWIVAAITVTEFLIVV). At 371 to 376 (KYDPNT) the chain is on the cytoplasmic side. A helical membrane pass occupies residues 377–397 (IMLPIPFFITQCWILGIALIL). The Lumenal portion of the chain corresponds to 398–452 (VWTLWRFFIRDITLRYKETRRRRQEVSSERDGSSSAPSGRSKLNGSMDSVRHRKS). The segment at 419 to 452 (RRQEVSSERDGSSSAPSGRSKLNGSMDSVRHRKS) is disordered. Residues 430–444 (SSSAPSGRSKLNGSM) show a composition bias toward polar residues.

The protein belongs to the phosphatidyl serine synthase family.

The protein localises to the endoplasmic reticulum membrane. The catalysed reaction is a 1,2-diacyl-sn-glycero-3-phosphoethanolamine + L-serine = a 1,2-diacyl-sn-glycero-3-phospho-L-serine + ethanolamine. It catalyses the reaction 1-hexadecanoyl-2-(9Z-octadecenoyl)-sn-glycero-3-phosphoethanolamine + L-serine = 1-hexadecanoyl-2-(9Z-octadecenoyl)-sn-glycero-3-phospho-L-serine + ethanolamine. It carries out the reaction 1-hexadecanoyl-2-(4Z,7Z,10Z,13Z,16Z,19Z-docosahexaenoyl)-sn-glycero-3-phosphoethanolamine + L-serine = 1-hexadecanoyl-2-(4Z,7Z,10Z,13Z,16Z,19Z-docosahexaenoyl)-sn-glycero-3-phosphoserine + ethanolamine. The enzyme catalyses 1-octadecanoyl-2-(5Z,8Z,11Z,14Z)-eicosatetraenoyl-sn-glycero-3-phosphoethanolamine + L-serine = 1-octadecanoyl-2-(5Z,8Z,11Z,14Z)-eicosatetraenoyl-sn-glycero-3-phosphoserine + ethanolamine. The catalysed reaction is 1-octadecanoyl-2-(4Z,7Z,10Z,13Z,16Z,19Z-docosahexaenoyl)-sn-glycero-3-phosphoethanolamine + L-serine = 1-octadecanoyl-2-(4Z,7Z,10Z,13Z,16Z,19Z-docosahexaenoyl)-sn-glycero-3-phosphoserine + ethanolamine. It catalyses the reaction 1-(1Z-octadecenyl)-2-(4Z,7Z,10Z,13Z,16Z,19Z-docosahexaenoyl)-sn-glycero-3-phosphoethanolamine + L-serine = 1-(1Z-octadecenyl)-2-(4Z,7Z,10Z,13Z,16Z,19Z-docosahexaenoyl)-sn-glycero-3-phospho-L-serine + ethanolamine. It carries out the reaction 1-octadecanoyl-2-(9Z-octadecenoyl)-sn-glycero-3-phosphoethanolamine + L-serine = 1-octadecanoyl-2-(9Z-octadecenoyl)-sn-glycero-3-phospho-L-serine + ethanolamine. The enzyme catalyses 1-(1Z-octadecenyl)-2-(9Z-octadecenoyl)-sn-glycero-3-phosphoethanolamine + L-serine = 1-(1Z-octadecenyl)-2-(9Z-octadecenoyl)-sn-glycero-3-phospho-L-serine + ethanolamine. The catalysed reaction is 1-(1Z-octadecenyl)-2-(5Z,8Z,11Z,14Z- eicosatetraenoyl)-sn-glycero-3-phosphoethanolamine + L-serine = 1-(1Z-octadecenyl)-2-(5Z,8Z,11Z,14Z-eicosatetraenoyl)-sn-glycero-3-phospho-L-serine + ethanolamine. The protein operates within phospholipid metabolism; phosphatidylserine biosynthesis. Catalyzes a base-exchange reaction in which the polar head group of phosphatidylethanolamine (PE) or phosphatidylcholine (PC) is replaced by L-serine. Catalyzes the conversion of phosphatatidylethanolamine and does not act on phosphatidylcholine. Can utilize both phosphatidylethanolamine (PE) plasmalogen and diacyl PE as substrate and the latter is six times better utilized, indicating the importance of an ester linkage at the sn-1 position. Although it shows no sn-1 fatty acyl preference, exhibits significant preference towards docosahexaenoic acid (22:6n-3) compared with 18:1 or 20:4 at the sn-2 position. The sequence is that of Phosphatidylserine synthase 2 (ptdss2) from Danio rerio (Zebrafish).